The chain runs to 174 residues: Transgelin (174 aa).

The region spanning 3–109 (SQLEKEAREW…SIHSFSRYAA (107 aa)) is the Calponin-homology (CH) domain.

As to quaternary structure, binds to actin.

The protein resides in the cytoplasm. Functionally, has actin-binding and actin-bundling activity and is a component of the actin patch. Stabilizes actin filaments against disassembly. Cross-links F-actin and is required for the formation of the contractile F-actin ring. This is Transgelin (stg1) from Schizosaccharomyces pombe (strain 972 / ATCC 24843) (Fission yeast).